Here is a 329-residue protein sequence, read N- to C-terminus: G-protein coupled bile acid receptor 1 (329 aa).

The Extracellular portion of the chain corresponds to 1–15 (MMTPNSTELSAIPMG). The N-linked (GlcNAc...) asparagine glycan is linked to Asn-5. A helical transmembrane segment spans residues 16–36 (VLGLSLALASLIVIANLLLAL). Topologically, residues 37 to 49 (GIALDRHLRSPPA) are cytoplasmic. The chain crosses the membrane as a helical span at residues 50–70 (GCFFLSLLLAGLLTGLALPML). Topologically, residues 71-84 (PGLWSRNHQGYWSC) are extracellular. Cysteines 84 and 154 form a disulfide. A helical membrane pass occupies residues 85-105 (LLLHLTPNFCFLSLLANLLLV). The Cytoplasmic segment spans residues 106 to 124 (HGERYMAVLQPLRPHGSVR). The chain crosses the membrane as a helical span at residues 125-145 (LALFLTWVSSLFFASLPALGW). The Extracellular portion of the chain corresponds to 146–164 (NHWSPDANCSSQAVFPAPY). The N-linked (GlcNAc...) asparagine glycan is linked to Asn-153. The helical transmembrane segment at 165–185 (LYLEVYGLLLPAVGATALLSV) threads the bilayer. Residues 186-229 (RVLATAHRQLCEIRRLERAVCRDVPSTLARALTWRQARAQAGAT) lie on the Cytoplasmic side of the membrane. The helical transmembrane segment at 230 to 250 (LLFLLCWGPYVATLLLSVLAY) threads the bilayer. The Extracellular portion of the chain corresponds to 251 to 260 (ERRPPLGPGT). The chain crosses the membrane as a helical span at residues 261-281 (LLSLISLGSTSAAAVPVAMGL). Residues 282-329 (GDQRYTAPWRTAAQRCLRVLRGRAKRDNPGPSTAYHTSSQCSIDLDLN) lie on the Cytoplasmic side of the membrane.

This sequence belongs to the G-protein coupled receptor 1 family.

The protein localises to the cell membrane. Receptor for bile acid. Bile acid-binding induces its internalization, activation of extracellular signal-regulated kinase and intracellular cAMP production. May be involved in the suppression of macrophage functions by bile acids. Involved in bile acid promoted GLP1R secretion. This Mus musculus (Mouse) protein is G-protein coupled bile acid receptor 1 (Gpbar1).